The primary structure comprises 111 residues: Ribonuclease P protein component (111 aa).

The protein belongs to the RnpA family. In terms of assembly, consists of a catalytic RNA component (M1 or rnpB) and a protein subunit.

The enzyme catalyses Endonucleolytic cleavage of RNA, removing 5'-extranucleotides from tRNA precursor.. Its function is as follows. RNaseP catalyzes the removal of the 5'-leader sequence from pre-tRNA to produce the mature 5'-terminus. It can also cleave other RNA substrates such as 4.5S RNA. The protein component plays an auxiliary but essential role in vivo by binding to the 5'-leader sequence and broadening the substrate specificity of the ribozyme. This chain is Ribonuclease P protein component, found in Mycoplasmopsis pulmonis (strain UAB CTIP) (Mycoplasma pulmonis).